The chain runs to 993 residues: Synaptonemal complex protein 1 (993 aa).

A Mediates head to head self-assembly of N-terminal ends motif is present at residues 98 to 108 (PMSRLYSKLYK). A Nuclear localization signal motif is present at residues 114–117 (KKWK). Coiled coils occupy residues 117-172 (KVSI…LIKE) and 215-688 (IEKM…EIEN). Residues 203–359 (ETRQVYVDLN…SQLTEVKEAQ (157 aa)) form an interaction with SYCE3 region. Residues 694–788 (GKLLGEVEKA…VSLKKQLEIE (95 aa)) form a required for pH-induced assembly of C-terminal ends into antiparallel tetramers region. The Nuclear localization signal motif lies at 697–700 (LGEV). Positions 764–808 (KIALETELSNIRNELVSLKKQLEIEKEEKEKLKMAKENTAILKDK) form a coiled coil. Residues 801–993 (NTAILKDKKD…RLKEAEKLFS (193 aa)) form a DNA-binding region. The residue at position 820 (S820) is a Phosphoserine. The disordered stretch occupies residues 824–861 (TSWKFDSKTTPSQNISRLSSSMDSGKSKDNRDNLRASA). Over residues 831–847 (KTTPSQNISRLSSSMDS) the composition is skewed to polar residues. Residues 848–857 (GKSKDNRDNL) show a composition bias toward basic and acidic residues. A Nuclear localization signal motif is present at residues 898–901 (KKRK).

Structural component of synaptonemal complexes. Homotetramer that consists of an N-terminal four-helical bundle that bifurcates into two elongated C-terminal dimeric coiled coils. This tetrameric building block potentially self-assembles into a supramolecular zipper-like lattice to mediate meiotic chromosome synapsis. Self-assembly is likely initiated by local proton density at chromosome axis, which is predicted to trigger antiparallel back to back assembly of adjacent C-terminal ends into tetrameric structures that anchor to chromosomal DNA. Then the N-terminal ends are predicted to undergo cooperative antiparallel head to head assembly at the midline of synaptonemal complexes central element to form a zipper-like lattice between properly aligned homologous chromosomes. The nascent synapsis generated by SYCP1 is stabilized through interaction with central element proteins SYCE1 and SYCE2. Interacts (via tetrameric core) with SYCE3; the interaction remodels SYCP1 homotetramers to 2:1 heterotrimers with SYCE3. SYCP1/SYCE3 heterotrimers form lattice assemblies as part of the mature synaptonemal complex via both lateral and head-to-head interactions. Forms a complex with EWSR1, PRDM9, SYCP3 and REC8; complex formation is dependent of phosphorylated form of REC8 and requires PRDM9 bound to hotspot DNA; EWSR1 joins PRDM9 with the chromosomal axis through REC8. Interacts with SPO16. In terms of tissue distribution, detected in testis. Detected in spermatocytes (at protein level).

It localises to the nucleus. Its subcellular location is the chromosome. It is found in the centromere. Functionally, major component of the transverse filaments of synaptonemal complexes, formed between homologous chromosomes during meiotic prophase. Required for normal assembly of the central element of the synaptonemal complexes. Required for normal centromere pairing during meiosis. Required for normal meiotic chromosome synapsis during oocyte and spermatocyte development and for normal male and female fertility. This chain is Synaptonemal complex protein 1, found in Mus musculus (Mouse).